Reading from the N-terminus, the 93-residue chain is UPF0473 protein YrzB (93 aa).

Belongs to the UPF0473 family.

This is UPF0473 protein YrzB (yrzB) from Bacillus subtilis (strain 168).